A 283-amino-acid polypeptide reads, in one-letter code: Protein ATAF2 (283 aa).

One can recognise an NAC domain in the interval 7-159 (LPAGFRFHPT…DWVLCRIYNK (153 aa)). A DNA-binding region spans residues 103 to 165 (LGIKKALVFY…IYNKKGTMEK (63 aa)). The interval 171-211 (EKPRTTTMAEQSSSPFDTSDSTYPTLQEDDSSSSGGHGHVV) is disordered. The span at 175–195 (TTTMAEQSSSPFDTSDSTYPT) shows a compositional bias: polar residues.

As to quaternary structure, homodimer. Interacts with AHK2. Interacts with AHL12 and AHL27. Interacts with the helicase domain of the tobamovirus (TMV) replicase. In terms of tissue distribution, expressed in roots, cotyledons, rosette leaves, cauline leaves and mature flowers. Expressed at low levels in stems and flower buds.

The protein resides in the nucleus. In terms of biological role, involved in disease resistance response. May function as repressor of pathogenesis-related proteins. May function in the regulation of host basal defense responses against viral infection. Transcriptional activator involved in responses to wounding and infection with tobamovirus (TMV). Binds to the DNA sequences 5'-AAAATATCT-3' and 5'AGATTTTT-3' of CYP734A1/BAS1 and CYP72C1/SOB7 promoters, respectively. Acts as a suppressor of the brassinosteroid (BR)-inactivating enzymes CYP734A1/BAS1 and CYP72C1/SOB7, and prevents their expression in almost all tissues. Plays a central role in integrating BR homeostasis and seedling development. Regulates the spatial regulation of BR homeostasis and participates in the regulation of hypocotyl elongation and root growth by suppressing BR catabolism. Mediates connection between BR catabolism and photomorphogenesis. Binds to, and transactivates the promoter of the auxin biosynthetic gene NIT2. Stress-responsive NAC transcription factor involved in ABA-inducible leaf senescence signaling. Required for normal seed development and morphology. The polypeptide is Protein ATAF2 (NAC081) (Arabidopsis thaliana (Mouse-ear cress)).